A 118-amino-acid polypeptide reads, in one-letter code: V-type proton ATPase subunit F (118 aa).

The protein belongs to the V-ATPase F subunit family. V-ATPase is a heteromultimeric enzyme composed of a peripheral catalytic V1 complex (components A to H) attached to an integral membrane V0 proton pore complex (components: a, c, c', c'', d, e, f and VOA1).

The protein resides in the vacuole membrane. Its function is as follows. Subunit of the V1 complex of vacuolar(H+)-ATPase (V-ATPase), a multisubunit enzyme composed of a peripheral complex (V1) that hydrolyzes ATP and a membrane integral complex (V0) that translocates protons. V-ATPase is responsible for acidifying and maintaining the pH of intracellular compartments. The chain is V-type proton ATPase subunit F from Saccharomyces cerevisiae (strain ATCC 204508 / S288c) (Baker's yeast).